The sequence spans 464 residues: Argininosuccinate lyase (464 aa).

This sequence belongs to the lyase 1 family. Argininosuccinate lyase subfamily.

Its subcellular location is the cytoplasm. It catalyses the reaction 2-(N(omega)-L-arginino)succinate = fumarate + L-arginine. It participates in amino-acid biosynthesis; L-arginine biosynthesis; L-arginine from L-ornithine and carbamoyl phosphate: step 3/3. The chain is Argininosuccinate lyase from Frankia casuarinae (strain DSM 45818 / CECT 9043 / HFP020203 / CcI3).